We begin with the raw amino-acid sequence, 2325 residues long: Protein sidekick homolog (2325 aa).

The signal sequence occupies residues 1-26; that stretch reads MRNRLLLIFYTTTVLWTIGYTQLVLG. The Extracellular segment spans residues 27–2019; it reads KPPIFQDGGS…IPDDPFYTTW (1993 aa). Ig-like C2-type domains follow at residues 28-105, 217-319, and 324-397; these read PPIF…AAIS, PSLQ…AYMT, and PILK…ADLA. Cystine bridges form between Cys52-Cys94, Cys247-Cys301, and Cys345-Cys386. N-linked (GlcNAc...) asparagine glycosylation is present at Asn407. Ig-like C2-type domains lie at 456–544 and 547–638; these read PSQK…VQVN and SLIE…AMLQ. 2 disulfide bridges follow: Cys480–Cys528 and Cys568–Cys622. 6 N-linked (GlcNAc...) asparagine glycosylation sites follow: Asn632, Asn655, Asn807, Asn868, Asn932, and Asn1016. 13 Fibronectin type-III domains span residues 645–751, 756–853, 858–957, 961–1055, 1059–1154, 1159–1254, 1259–1359, 1363–1457, 1463–1566, 1571–1671, 1673–1775, 1776–1872, and 1873–2004; these read MPER…MPQQ, APRN…TSEG, APKN…TEED, SVDE…VPPE, RPSM…TLQT, PSQR…TYES, SPRN…TMED, PPES…SSVR, APAP…TLPS, QPIS…VGYS, PKRN…DKPG, PVGI…SKDG, and PPPP…TEQL. Residues 1036-1059 form a disordered region; it reads TRKGDGPVEETKFESGVPPELPGR. The segment covering 1037-1048 has biased composition (basic and acidic residues); it reads RKGDGPVEETKF. An N-linked (GlcNAc...) asparagine glycan is attached at Asn1107. The tract at residues 1137 to 1161 is disordered; it reads KGRGAPSEPSRSFETLQTNPDTPSQ. Residues 1145-1161 show a composition bias toward polar residues; sequence PSRSFETLQTNPDTPSQ. Asn1614 carries N-linked (GlcNAc...) asparagine glycosylation. Disordered stretches follow at residues 1857–1884 and 1918–1947; these read GEQR…ITSG and PANG…ATST. Asn1863 carries N-linked (GlcNAc...) asparagine glycosylation. Positions 1935–1947 are enriched in low complexity; the sequence is AKSAAQTAAATST. A helical transmembrane segment spans residues 2020–2040; sequence WFMALVAMGAFVLIVIIIAIL. The Cytoplasmic portion of the chain corresponds to 2041-2325; sequence CVTGSSAKYR…NLTTGFSSFV (285 aa). Disordered stretches follow at residues 2080 to 2113, 2164 to 2187, 2202 to 2226, and 2285 to 2325; these read NMTR…SVLG, TAYV…PTRS, RGHI…LQQP, and ILTG…SSFV. The span at 2091–2100 shows a compositional bias: polar residues; that stretch reads PGTTQSWVSD. Low complexity predominate over residues 2215 to 2226; it reads GSQPQGSPLQQP. Composition is skewed to polar residues over residues 2294–2305 and 2313–2325; these read AGRSSTTDSTSE and ATPN…SSFV.

The protein belongs to the sidekick family.

It is found in the membrane. Its function is as follows. Cell adhesion protein. In Caenorhabditis elegans, this protein is Protein sidekick homolog (rig-4).